The chain runs to 63 residues: Small ribosomal subunit protein eS27 (63 aa).

Zn(2+) contacts are provided by Cys18, Cys21, Cys37, and Cys40. The C4-type zinc finger occupies 18 to 40 (CIDCGNEQIVFSHPATKVRCLIC).

Belongs to the eukaryotic ribosomal protein eS27 family. As to quaternary structure, part of the 30S ribosomal subunit. Zn(2+) is required as a cofactor.

In Pyrococcus furiosus (strain ATCC 43587 / DSM 3638 / JCM 8422 / Vc1), this protein is Small ribosomal subunit protein eS27.